Reading from the N-terminus, the 704-residue chain is Ion-translocating oxidoreductase complex subunit C (704 aa).

4Fe-4S ferredoxin-type domains follow at residues 368–397 and 407–436; these read MGAP…QQLY and KATA…VQYF. C377, C380, C383, C387, C416, C419, C422, and C426 together coordinate [4Fe-4S] cluster. A disordered region spans residues 534–682; sequence QARAKQAAHP…AEPADPRKAA (149 aa).

The protein belongs to the 4Fe4S bacterial-type ferredoxin family. RnfC subfamily. As to quaternary structure, the complex is composed of six subunits: RsxA, RsxB, RsxC, RsxD, RsxE and RsxG. It depends on [4Fe-4S] cluster as a cofactor.

The protein localises to the cell inner membrane. In terms of biological role, part of a membrane-bound complex that couples electron transfer with translocation of ions across the membrane. Required to maintain the reduced state of SoxR. The chain is Ion-translocating oxidoreductase complex subunit C from Salmonella enteritidis PT4 (strain P125109).